We begin with the raw amino-acid sequence, 66 residues long: DNA-directed RNA polymerase subunit Rpo10 (66 aa).

Zn(2+)-binding residues include Cys7, Cys10, Cys47, and Cys48.

This sequence belongs to the archaeal Rpo10/eukaryotic RPB10 RNA polymerase subunit family. As to quaternary structure, part of the RNA polymerase complex. Zn(2+) is required as a cofactor.

The protein resides in the cytoplasm. The enzyme catalyses RNA(n) + a ribonucleoside 5'-triphosphate = RNA(n+1) + diphosphate. In terms of biological role, DNA-dependent RNA polymerase (RNAP) catalyzes the transcription of DNA into RNA using the four ribonucleoside triphosphates as substrates. This Haloarcula marismortui (strain ATCC 43049 / DSM 3752 / JCM 8966 / VKM B-1809) (Halobacterium marismortui) protein is DNA-directed RNA polymerase subunit Rpo10.